A 274-amino-acid chain; its full sequence is MSDNEIVAGIMRDHIINLLKEGKRIDDRGFEDYRPIEIEVGIIEKAEGSALVKLGSTQVLVGIKTTLGEPFPDTPNMGVMTTNVELVPLASPTFEPGPPDERAIELARVTDRGIRESRALNLEKMVIVPGKIVRVVFIDVHVLDHDGNLMDAIGIASIAALLNAKVPKVEYNEETGEVEILEEKEPLPVERIPIPVTFAKIGNILVVDPSLEEELVMDGRLTVTTDETGHISAVQKGEGGAFKLEEVMYAVETAFKKAEEIRKIVLEAIKKSGE.

This sequence belongs to the RNase PH family. Rrp42 subfamily. In terms of assembly, component of the archaeal exosome complex. Forms a hexameric ring-like arrangement composed of 3 Rrp41-Rrp42 heterodimers. The hexameric ring associates with a trimer of Rrp4 and/or Csl4 subunits.

It is found in the cytoplasm. Functionally, non-catalytic component of the exosome, which is a complex involved in RNA degradation. Contributes to the structuring of the Rrp41 active site. The polypeptide is Exosome complex component Rrp42 (Pyrococcus horikoshii (strain ATCC 700860 / DSM 12428 / JCM 9974 / NBRC 100139 / OT-3)).